Consider the following 629-residue polypeptide: Forkhead box protein O (629 aa).

Residue Thr-49 is modified to Phosphothreonine; by PKB/AKT1. Ser-78 is subject to Phosphoserine. The fork-head DNA-binding region spans 98–204 (WGNLSYADLI…ETSRYEKRRG (107 aa)). 5 disordered regions span residues 185–208 (KSVRRRAASMETSRYEKRRGRAKK), 220–274 (GLND…SPIR), 321–368 (QQQF…QTLQ), 394–417 (SPNSVTTTMSPAYPNSEPSSDSLN), and 563–597 (QHLQQQQQQHHQHQQQLLLNNNNNNNNNNSSNSSL). Phosphoserine; by PKB/AKT1 is present on Ser-193. Polar residues-rich tracts occupy residues 224 to 233 (ATPSPSSSVS) and 259 to 268 (RASSNASSCG). At Ser-262 the chain carries Phosphoserine; by PKB/AKT1. A phosphoserine mark is found at Ser-265, Ser-266, and Ser-271. The span at 332–341 (SQPPPPPYQP) shows a compositional bias: pro residues. Positions 342 to 356 (PQLQQQQQQQPSYSL) are enriched in low complexity. The span at 394-403 (SPNSVTTTMS) shows a compositional bias: polar residues.

As to quaternary structure, interacts with melt.

The protein resides in the cytoplasm. It is found in the nucleus. Transcription factor involved in the regulation of the insulin signaling pathway. Consistently activates both the downstream target Thor\d4EBP and the feedback control target InR. Involved in negative regulation of the cell cycle, modulating cell growth and proliferation. In response to cellular stresses, such as nutrient deprivation or increased levels of reactive oxygen species, foxo is activated and inhibits growth through the action of target genes such as Thor. Foxo activated in the adult fat body can regulate lifespan in adults; an insulin peptide itself may function as one secondary messenger of insulin-regulated aging. Also regulates Lip4, homolog of human acid lipases, thereby acting as a key modulator of lipid metabolism by insulin signaling and integrates insulin responses to glucose and lipid homeostasis. The polypeptide is Forkhead box protein O (Drosophila persimilis (Fruit fly)).